A 199-amino-acid polypeptide reads, in one-letter code: Large ribosomal subunit protein bL25 (199 aa).

This sequence belongs to the bacterial ribosomal protein bL25 family. CTC subfamily. Part of the 50S ribosomal subunit; part of the 5S rRNA/L5/L18/L25 subcomplex. Contacts the 5S rRNA. Binds to the 5S rRNA independently of L5 and L18.

Its function is as follows. This is one of the proteins that binds to the 5S RNA in the ribosome where it forms part of the central protuberance. The chain is Large ribosomal subunit protein bL25 from Herpetosiphon aurantiacus (strain ATCC 23779 / DSM 785 / 114-95).